Consider the following 111-residue polypeptide: UPF0060 membrane protein Cbei_2176 (111 aa).

4 helical membrane passes run 7 to 27, 33 to 53, 60 to 80, and 85 to 105; these read ILYF…IWIW, SYLY…IPTL, FGKV…LWGW, and IVPD…VIVI.

This sequence belongs to the UPF0060 family.

It localises to the cell membrane. In Clostridium beijerinckii (strain ATCC 51743 / NCIMB 8052) (Clostridium acetobutylicum), this protein is UPF0060 membrane protein Cbei_2176.